Reading from the N-terminus, the 204-residue chain is Octanoyltransferase (204 aa).

In terms of domain architecture, BPL/LPL catalytic spans lysine 27–histidine 204. Substrate contacts are provided by residues arginine 66–histidine 73, alanine 133–glycine 135, and glycine 146–serine 148. The active-site Acyl-thioester intermediate is cysteine 164.

This sequence belongs to the LipB family.

The protein resides in the cytoplasm. The catalysed reaction is octanoyl-[ACP] + L-lysyl-[protein] = N(6)-octanoyl-L-lysyl-[protein] + holo-[ACP] + H(+). The protein operates within protein modification; protein lipoylation via endogenous pathway; protein N(6)-(lipoyl)lysine from octanoyl-[acyl-carrier-protein]: step 1/2. Its function is as follows. Catalyzes the transfer of endogenously produced octanoic acid from octanoyl-acyl-carrier-protein onto the lipoyl domains of lipoate-dependent enzymes. Lipoyl-ACP can also act as a substrate although octanoyl-ACP is likely to be the physiological substrate. In Vesicomyosocius okutanii subsp. Calyptogena okutanii (strain HA), this protein is Octanoyltransferase.